We begin with the raw amino-acid sequence, 660 residues long: DNA mismatch repair protein MutL (660 aa).

This sequence belongs to the DNA mismatch repair MutL/HexB family.

Its function is as follows. This protein is involved in the repair of mismatches in DNA. It is required for dam-dependent methyl-directed DNA mismatch repair. May act as a 'molecular matchmaker', a protein that promotes the formation of a stable complex between two or more DNA-binding proteins in an ATP-dependent manner without itself being part of a final effector complex. This Streptococcus equi subsp. zooepidemicus (strain MGCS10565) protein is DNA mismatch repair protein MutL.